A 366-amino-acid chain; its full sequence is UDP-N-acetylenolpyruvoylglucosamine reductase (366 aa).

One can recognise an FAD-binding PCMH-type domain in the interval 27–197 (LGGPAAGFVV…LRVRFLLRDG (171 aa)). Arg175 is a catalytic residue. The active-site Proton donor is Ser252. Glu358 is a catalytic residue.

This sequence belongs to the MurB family. Requires FAD as cofactor.

It localises to the cytoplasm. It carries out the reaction UDP-N-acetyl-alpha-D-muramate + NADP(+) = UDP-N-acetyl-3-O-(1-carboxyvinyl)-alpha-D-glucosamine + NADPH + H(+). The protein operates within cell wall biogenesis; peptidoglycan biosynthesis. Functionally, cell wall formation. The chain is UDP-N-acetylenolpyruvoylglucosamine reductase from Saccharopolyspora erythraea (strain ATCC 11635 / DSM 40517 / JCM 4748 / NBRC 13426 / NCIMB 8594 / NRRL 2338).